Consider the following 375-residue polypeptide: Succinyl-diaminopimelate desuccinylase (375 aa).

Histidine 66 is a Zn(2+) binding site. Residue aspartate 68 is part of the active site. Aspartate 99 serves as a coordination point for Zn(2+). Glutamate 133 acts as the Proton acceptor in catalysis. Glutamate 134, glutamate 162, and histidine 348 together coordinate Zn(2+).

It belongs to the peptidase M20A family. DapE subfamily. In terms of assembly, homodimer. Zn(2+) is required as a cofactor. Co(2+) serves as cofactor.

It carries out the reaction N-succinyl-(2S,6S)-2,6-diaminopimelate + H2O = (2S,6S)-2,6-diaminopimelate + succinate. It participates in amino-acid biosynthesis; L-lysine biosynthesis via DAP pathway; LL-2,6-diaminopimelate from (S)-tetrahydrodipicolinate (succinylase route): step 3/3. Functionally, catalyzes the hydrolysis of N-succinyl-L,L-diaminopimelic acid (SDAP), forming succinate and LL-2,6-diaminopimelate (DAP), an intermediate involved in the bacterial biosynthesis of lysine and meso-diaminopimelic acid, an essential component of bacterial cell walls. The sequence is that of Succinyl-diaminopimelate desuccinylase from Shigella dysenteriae serotype 1 (strain Sd197).